A 624-amino-acid polypeptide reads, in one-letter code: (-)-beta-phellandrene synthase 2, chloroplastic (624 aa).

The transit peptide at 1 to 47 (MALVSVAPLVSMRRSLFSSPYELKSIDKTIPNLVMCRKRMLGRPSIR) directs the protein to the chloroplast. Positions 375, 379, and 527 each coordinate Mg(2+). The DDXXD motif motif lies at 375-379 (DDIYD).

It belongs to the terpene synthase family. Tpsd subfamily. The cofactor is Mg(2+). Mn(2+) serves as cofactor.

Its subcellular location is the plastid. It is found in the chloroplast. It carries out the reaction (2E)-geranyl diphosphate = (-)-beta-phellandrene + diphosphate. The protein operates within terpene metabolism; oleoresin biosynthesis. It functions in the pathway secondary metabolite biosynthesis; terpenoid biosynthesis. Its function is as follows. Monoterpene synthase (TPS) involved in the biosynthesis of monoterpene natural products included in conifer oleoresin secretions and volatile emissions; these compounds contribute to biotic and abiotic stress defense against herbivores and pathogens. Catalyzes the conversion of (2E)-geranyl diphosphate (GPP) to (-)-beta-phellandrene. The sequence is that of (-)-beta-phellandrene synthase 2, chloroplastic from Pinus contorta (Shore pine).